The primary structure comprises 426 residues: Gamma-glutamyl phosphate reductase (426 aa).

This sequence belongs to the gamma-glutamyl phosphate reductase family.

The protein resides in the cytoplasm. The enzyme catalyses L-glutamate 5-semialdehyde + phosphate + NADP(+) = L-glutamyl 5-phosphate + NADPH + H(+). It functions in the pathway amino-acid biosynthesis; L-proline biosynthesis; L-glutamate 5-semialdehyde from L-glutamate: step 2/2. Its function is as follows. Catalyzes the NADPH-dependent reduction of L-glutamate 5-phosphate into L-glutamate 5-semialdehyde and phosphate. The product spontaneously undergoes cyclization to form 1-pyrroline-5-carboxylate. The protein is Gamma-glutamyl phosphate reductase of Cupriavidus metallidurans (strain ATCC 43123 / DSM 2839 / NBRC 102507 / CH34) (Ralstonia metallidurans).